A 1901-amino-acid chain; its full sequence is Methylcytosine dioxygenase tet3 (1901 aa).

Residues 58–99 form a CXXC-type zinc finger; sequence SNKKRKRCGVCVPCLRKEPCGACYNCVNRSTSHQICKMRKCE. Positions 65, 68, 71, 77, 80, 83, 93, and 98 each coordinate Zn(2+). Disordered regions lie at residues 434 to 455, 602 to 658, 751 to 787, and 808 to 867; these read KNAL…KKSS, WWVP…EGSA, KDQC…QNDL, and DFSL…PVSR. Composition is skewed to polar residues over residues 442-455 and 602-614; these read SPRQ…KKSS and WWVP…PVSK. The span at 640-652 shows a compositional bias: basic residues; sequence KPQRKQVQIKKPK. Over residues 758–771 the composition is skewed to low complexity; the sequence is STHDTSSSSGQGDS. The segment covering 847–867 has biased composition (polar residues); sequence ENSTKPATHSNPALSNNPVSR. 5 residues coordinate Zn(2+): C957, C959, C1017, H1043, and C1045. R1085 is a binding site for 2-oxoglutarate. Zn(2+)-binding residues include C1095, C1097, C1113, C1122, and C1182. Residue C1198 coordinates 2-oxoglutarate. H1204 contacts Zn(2+). 2 residues coordinate Fe cation: H1206 and D1208. Residue H1240 coordinates 2-oxoglutarate. Disordered stretches follow at residues 1282 to 1338, 1457 to 1501, 1591 to 1624, and 1680 to 1745; these read SEPA…QQTK, YGSE…VETT, SNAP…PGKV, and SATP…DEEI. Positions 1291–1325 are enriched in basic and acidic residues; that stretch reads RQLEAKKAAAEKKKLQKEKLVSPDKTKQEPSDKKT. Positions 1326–1338 are enriched in polar residues; the sequence is CQQNPGVPQQQTK. Basic and acidic residues predominate over residues 1465-1474; sequence SFRRSSEVPH. The span at 1477–1487 shows a compositional bias: polar residues; that stretch reads SLQNPSSQKSV. Polar residues-rich tracts occupy residues 1680-1693 and 1702-1719; these read SATP…TPCS and SFPN…SQNH. H1780 contacts Fe cation. 2-oxoglutarate is bound at residue 1795–1797; that stretch reads RIS.

The protein belongs to the TET family. The cofactor is Fe(2+). It depends on Zn(2+) as a cofactor.

The protein localises to the nucleus. It localises to the chromosome. The enzyme catalyses a 5-methyl-2'-deoxycytidine in DNA + 2-oxoglutarate + O2 = a 5-hydroxymethyl-2'-deoxycytidine in DNA + succinate + CO2. It catalyses the reaction a 5-hydroxymethyl-2'-deoxycytidine in DNA + 2-oxoglutarate + O2 = a 5-formyl-2'-deoxycytidine in DNA + succinate + CO2 + H2O. The catalysed reaction is a 5-formyl-2'-deoxycytidine in DNA + 2-oxoglutarate + O2 = a 5-carboxyl-2'-deoxycytidine in DNA + succinate + CO2 + H(+). In terms of biological role, dioxygenase that catalyzes the conversion of the modified genomic base 5-methylcytosine (5mC) into 5-hydroxymethylcytosine (5hmC) and plays a key role in epigenetic chromatin reprogramming during embryonic development. Conversion of 5mC into 5hmC probably constitutes the first step in cytosine demethylation. Selectively binds to the promoter region of target genes and contributes to regulate the expression of numerous developmental genes, including pax6, rax, sox9 and six3. May also contribute to the regulation of target genes in ways that do not require its enzyme activity. This Xenopus tropicalis (Western clawed frog) protein is Methylcytosine dioxygenase tet3.